Here is a 719-residue protein sequence, read N- to C-terminus: Phosphoribosylformylglycinamidine synthase subunit PurL (719 aa).

Residue His47 is part of the active site. Positions 50 and 89 each coordinate ATP. Glu91 contributes to the Mg(2+) binding site. Residues 92-95 and Arg114 contribute to the substrate site; that span reads SHNH. His93 serves as the catalytic Proton acceptor. Position 115 (Asp115) interacts with Mg(2+). Residue Gln238 coordinates substrate. Residue Asp266 coordinates Mg(2+). 310–312 is a substrate binding site; that stretch reads ESQ. ATP is bound by residues Asp488 and Gly525. Asn526 lines the Mg(2+) pocket. Ser528 is a substrate binding site.

The protein belongs to the FGAMS family. As to quaternary structure, monomer. Part of the FGAM synthase complex composed of 1 PurL, 1 PurQ and 2 PurS subunits.

It localises to the cytoplasm. It carries out the reaction N(2)-formyl-N(1)-(5-phospho-beta-D-ribosyl)glycinamide + L-glutamine + ATP + H2O = 2-formamido-N(1)-(5-O-phospho-beta-D-ribosyl)acetamidine + L-glutamate + ADP + phosphate + H(+). It participates in purine metabolism; IMP biosynthesis via de novo pathway; 5-amino-1-(5-phospho-D-ribosyl)imidazole from N(2)-formyl-N(1)-(5-phospho-D-ribosyl)glycinamide: step 1/2. Functionally, part of the phosphoribosylformylglycinamidine synthase complex involved in the purines biosynthetic pathway. Catalyzes the ATP-dependent conversion of formylglycinamide ribonucleotide (FGAR) and glutamine to yield formylglycinamidine ribonucleotide (FGAM) and glutamate. The FGAM synthase complex is composed of three subunits. PurQ produces an ammonia molecule by converting glutamine to glutamate. PurL transfers the ammonia molecule to FGAR to form FGAM in an ATP-dependent manner. PurS interacts with PurQ and PurL and is thought to assist in the transfer of the ammonia molecule from PurQ to PurL. The chain is Phosphoribosylformylglycinamidine synthase subunit PurL from Ruegeria pomeroyi (strain ATCC 700808 / DSM 15171 / DSS-3) (Silicibacter pomeroyi).